A 471-amino-acid chain; its full sequence is Uronate isomerase (471 aa).

This sequence belongs to the metallo-dependent hydrolases superfamily. Uronate isomerase family.

The enzyme catalyses D-glucuronate = D-fructuronate. It carries out the reaction aldehydo-D-galacturonate = keto-D-tagaturonate. It participates in carbohydrate metabolism; pentose and glucuronate interconversion. The protein is Uronate isomerase of Xanthomonas campestris pv. campestris (strain 8004).